The sequence spans 391 residues: NAD(P)H-quinone oxidoreductase subunit H, chloroplastic (391 aa).

This sequence belongs to the complex I 49 kDa subunit family. NDH is composed of at least 16 different subunits, 5 of which are encoded in the nucleus.

Its subcellular location is the plastid. The protein resides in the chloroplast thylakoid membrane. It catalyses the reaction a plastoquinone + NADH + (n+1) H(+)(in) = a plastoquinol + NAD(+) + n H(+)(out). The enzyme catalyses a plastoquinone + NADPH + (n+1) H(+)(in) = a plastoquinol + NADP(+) + n H(+)(out). In terms of biological role, NDH shuttles electrons from NAD(P)H:plastoquinone, via FMN and iron-sulfur (Fe-S) centers, to quinones in the photosynthetic chain and possibly in a chloroplast respiratory chain. The immediate electron acceptor for the enzyme in this species is believed to be plastoquinone. Couples the redox reaction to proton translocation, and thus conserves the redox energy in a proton gradient. The sequence is that of NAD(P)H-quinone oxidoreductase subunit H, chloroplastic from Nephroselmis olivacea (Green alga).